The primary structure comprises 437 residues: MNPLSIAQDELKAIQSSQPIVWLNRNYQNPASAPATPNVDALYAAEARLKRFAPLLQRLFPELEPSHGLIESSLIQADRLNNRINPVGGLLFLKADHDLPVAGSVKARGGIHEVLCFAESLALTHGVLKDVDSDYCTLASQSARDLFSKHTITVGSTGNLGLSIGVIGSALGFKTVVHMSSDAKEWKMERLRKRGVRVVEHDADYGAALEAGRLETIADPCGYFVDDERSPNLFMGYAVAAKRLQAQLEALNIKVDADHPLFVYLPAGVGGAPGGITYGLKHIFNDHVHCFFAEPVQSPCMLLGMAGAPGAAPTSIYELDLKNRTDADGLAVGAASQWVCDATRNLLSGVYTATDEQLYQQLYLLKDLENIEVEPSAAIGCLGPAMLTSEAGQKYLDSHRLSHRMENSVHIPWLTGGSFVPDEEYQRYLAKAVNVST.

At Lys-106 the chain carries N6-(pyridoxal phosphate)lysine.

The protein belongs to the serine/threonine dehydratase family. DsdA subfamily. Pyridoxal 5'-phosphate serves as cofactor.

The enzyme catalyses D-serine = pyruvate + NH4(+). This Hahella chejuensis (strain KCTC 2396) protein is Probable D-serine dehydratase.